We begin with the raw amino-acid sequence, 353 residues long: Lactosylceramide 4-alpha-galactosyltransferase (353 aa).

The Cytoplasmic segment spans residues 1-22 (MSKPPDLLLRLLRGAPRQRVCT). The helical; Signal-anchor for type II membrane protein transmembrane segment at 23-43 (LFIIGFKFTFFVSIMIYWHVV) threads the bilayer. Residues 44-353 (GEPKEKGQLY…TTHEAMKMYL (310 aa)) are Lumenal-facing. Residue Asn121 is glycosylated (N-linked (GlcNAc...) asparagine). A DXD motif motif is present at residues 192 to 194 (DTD). Asn203 carries N-linked (GlcNAc...) asparagine glycosylation.

This sequence belongs to the glycosyltransferase 32 family. Ubiquitous. Highly expressed in kidney, heart, spleen, liver, testis and placenta.

The protein resides in the golgi apparatus membrane. The catalysed reaction is a beta-D-Gal-(1-&gt;4)-beta-D-Glc-(1&lt;-&gt;1)-Cer(d18:1(4E)) + UDP-alpha-D-galactose = a globoside Gb3Cer (d18:1(4E)) + UDP + H(+). It catalyses the reaction a beta-D-Gal-(1&lt;-&gt;1')-ceramide + UDP-alpha-D-galactose = alpha-D-Gal-(1-&gt;4)-beta-D-Gal-(1&lt;-&gt;1')-Cer + UDP + H(+). It functions in the pathway glycolipid biosynthesis. Functionally, catalyzes the transfer of galactose from UDP-alpha-D-galactose to lactosylceramide/beta-D-galactosyl-(1-&gt;4)-beta-D-glucosyl-(1&lt;-&gt;1)-ceramide(d18:1(4E)) to produce globotriaosylceramide/globoside Gb3Cer (d18:1(4E)). Also able to transfer galactose to galactosylceramide/beta-D-Gal-(1&lt;-&gt;1')-Cer. Globoside Gb3Cer is a glycosphingolipid of the globo serie, one of the major types of neutral root structures of glycosphingolipids, that constitute a significant portion of mammalian cell membranes. Globotriaosylceramide/globoside Gb3Cer in blood and tissue cell membranes is the antigen Pk of blood histogroup P. (Microbial infection) Globotriaosylceramide is one of the cellular ligands for bacterial verotoxins. This is Lactosylceramide 4-alpha-galactosyltransferase (A4GALT) from Homo sapiens (Human).